The chain runs to 929 residues: Protocadherin gamma-B7 (929 aa).

An N-terminal signal peptide occupies residues 1–30 (MGGSCAQRRRAGPRQVLFPLLLPLFYPTLC). Cadherin domains are found at residues 31 to 133 (EPIR…APQF), 134 to 242 (QKDE…PPVF), 243 to 347 (SQDV…SPEI), 348 to 452 (IITS…APVF), 453 to 562 (GQSA…APRV), and 570 to 675 (DGSA…LPDF). Topologically, residues 31-691 (EPIRYSIPEE…SDSQAEMQFY (661 aa)) are extracellular. Residues Asn419 and Asn545 are each glycosylated (N-linked (GlcNAc...) asparagine). Residues 692 to 712 (LVVALALISVLFLLAVILAIA) form a helical membrane-spanning segment. Over 713–929 (LRLRQSFSPT…KKKSGKKEKK (217 aa)) the chain is Cytoplasmic. Disordered regions lie at residues 806-838 (QAPP…WPNN) and 899-929 (ATLT…KEKK). Residues 807–838 (APPNTDWRFSQAQRPGTSGSQNGDDTGTWPNN) are compositionally biased toward polar residues. Residues 919 to 929 (NKKKSGKKEKK) are compositionally biased toward basic residues.

It is found in the cell membrane. Potential calcium-dependent cell-adhesion protein. May be involved in the establishment and maintenance of specific neuronal connections in the brain. The sequence is that of Protocadherin gamma-B7 (PCDHGB7) from Pan troglodytes (Chimpanzee).